A 107-amino-acid chain; its full sequence is Nucleoid-associated protein BAbS19_I00290 (107 aa).

It belongs to the YbaB/EbfC family. In terms of assembly, homodimer.

The protein resides in the cytoplasm. It localises to the nucleoid. Functionally, binds to DNA and alters its conformation. May be involved in regulation of gene expression, nucleoid organization and DNA protection. The polypeptide is Nucleoid-associated protein BAbS19_I00290 (Brucella abortus (strain S19)).